The primary structure comprises 442 residues: tRNA-2-methylthio-N(6)-dimethylallyladenosine synthase (442 aa).

Positions 3–120 (KKLYIETHGC…LPEMIDAARV (118 aa)) constitute an MTTase N-terminal domain. Residues Cys12, Cys49, Cys83, Cys157, Cys161, and Cys164 each contribute to the [4Fe-4S] cluster site. In terms of domain architecture, Radical SAM core spans 143-375 (RVDGPSAYVS…QHRLNQQGFE (233 aa)). In terms of domain architecture, TRAM spans 378–442 (RQMVGSIQRI…PHSLRGSLLQ (65 aa)).

Belongs to the methylthiotransferase family. MiaB subfamily. In terms of assembly, monomer. [4Fe-4S] cluster serves as cofactor.

Its subcellular location is the cytoplasm. It catalyses the reaction N(6)-dimethylallyladenosine(37) in tRNA + (sulfur carrier)-SH + AH2 + 2 S-adenosyl-L-methionine = 2-methylsulfanyl-N(6)-dimethylallyladenosine(37) in tRNA + (sulfur carrier)-H + 5'-deoxyadenosine + L-methionine + A + S-adenosyl-L-homocysteine + 2 H(+). Functionally, catalyzes the methylthiolation of N6-(dimethylallyl)adenosine (i(6)A), leading to the formation of 2-methylthio-N6-(dimethylallyl)adenosine (ms(2)i(6)A) at position 37 in tRNAs that read codons beginning with uridine. In Pseudomonas syringae pv. syringae (strain B728a), this protein is tRNA-2-methylthio-N(6)-dimethylallyladenosine synthase.